The sequence spans 277 residues: Putative phosphoenolpyruvate synthase regulatory protein (277 aa).

Gly-156–Thr-163 lines the ADP pocket.

This sequence belongs to the pyruvate, phosphate/water dikinase regulatory protein family. PSRP subfamily.

It catalyses the reaction [pyruvate, water dikinase] + ADP = [pyruvate, water dikinase]-phosphate + AMP + H(+). It carries out the reaction [pyruvate, water dikinase]-phosphate + phosphate + H(+) = [pyruvate, water dikinase] + diphosphate. Functionally, bifunctional serine/threonine kinase and phosphorylase involved in the regulation of the phosphoenolpyruvate synthase (PEPS) by catalyzing its phosphorylation/dephosphorylation. This is Putative phosphoenolpyruvate synthase regulatory protein from Deinococcus radiodurans (strain ATCC 13939 / DSM 20539 / JCM 16871 / CCUG 27074 / LMG 4051 / NBRC 15346 / NCIMB 9279 / VKM B-1422 / R1).